A 287-amino-acid chain; its full sequence is uncharacterized protein (287 aa).

Residues 43 to 50 (GKTGVGKS), 90 to 93 (DLPG), and 156 to 159 (DKAE) contribute to the GTP site. Positions 48–138 (GKSSLCNALF…LTVDEHFYHQ (91 aa)) constitute a G domain.

To E.coli YfjP and YeeP.

This is an uncharacterized protein from Escherichia coli (strain K12).